The chain runs to 211 residues: Protein-L-isoaspartate O-methyltransferase (211 aa).

Residue S62 is part of the active site.

This sequence belongs to the methyltransferase superfamily. L-isoaspartyl/D-aspartyl protein methyltransferase family.

The protein resides in the cytoplasm. It catalyses the reaction [protein]-L-isoaspartate + S-adenosyl-L-methionine = [protein]-L-isoaspartate alpha-methyl ester + S-adenosyl-L-homocysteine. In terms of biological role, catalyzes the methyl esterification of L-isoaspartyl residues in peptides and proteins that result from spontaneous decomposition of normal L-aspartyl and L-asparaginyl residues. It plays a role in the repair and/or degradation of damaged proteins. This Shewanella denitrificans (strain OS217 / ATCC BAA-1090 / DSM 15013) protein is Protein-L-isoaspartate O-methyltransferase.